A 114-amino-acid chain; its full sequence is Monothiol glutaredoxin-S8 (114 aa).

The Glutaredoxin domain maps to 1–113 (MDRVTRLASQ…PLLRDAGALW (113 aa)). Residue cysteine 21 participates in [2Fe-2S] cluster binding.

It belongs to the glutaredoxin family. CC-type subfamily.

It is found in the cytoplasm. May only reduce GSH-thiol disulfides, but not protein disulfides. This chain is Monothiol glutaredoxin-S8 (GRXS8), found in Oryza sativa subsp. japonica (Rice).